The chain runs to 94 residues: DASH complex subunit dad2 (94 aa).

The stretch at 18–38 (KLRDSSNDMVQQIETLAAKLE) forms a coiled coil. Positions 72-94 (VRIPPSTSNTNASATEQGDVEEV) are disordered. The segment covering 76-87 (PSTSNTNASATE) has biased composition (polar residues).

It belongs to the DASH complex DAD2 family. Component of the DASH complex consisting of ask1, dad1, dad2, dad3, dad4, dam1, duo1, dad5, spc19 and spc34, with a stoichiometry of one copy of each subunit per complex. Multiple DASH complexes oligomerize to form a ring that encircles spindle microtubules and organizes the rod-like NDC80 complexes of the outer kinetochore. DASH complex oligomerization strengthens microtubule attachments. On cytoplasmic microtubules, DASH complexes appear to form patches instead of rings.

Its subcellular location is the nucleus. The protein localises to the cytoplasm. The protein resides in the cytoskeleton. It is found in the spindle. It localises to the chromosome. Its subcellular location is the centromere. The protein localises to the kinetochore. Its function is as follows. Component of the DASH complex that connects microtubules with kinetochores and couples microtubule depolymerisation to chromosome movement; it is involved in retrieving kinetochores to the spindle poles before their re-orientation on the spindle in early mitosis and allows microtubule depolymerization to pull chromosomes apart and resist detachment during anaphase. Kinetochores, consisting of a centromere-associated inner segment and a microtubule-contacting outer segment, play a crucial role in chromosome segregation by mediating the physical connection between centromeric DNA and microtubules. Kinetochores also serve as an input point for the spindle assembly checkpoint, which delays anaphase until all chromosomes have bioriented on the mitotic spindle. The DASH complex mediates bipolar kinetochore-microtubule attachments and facilitates the formation of additional interactions between outer kinetochore components and spindle microtubules. During chromosome movement along the microtubule, it is required both for the sliding of kinetochores along the lateral side of the microtubule and also for microtubule end-on pulling on the kinetochore. Modulates cytoplasmic microtubule dynamics by tracking the plus-end of shortening microtubules and slowing their depolymerization. The sequence is that of DASH complex subunit dad2 from Schizosaccharomyces pombe (strain 972 / ATCC 24843) (Fission yeast).